Here is a 48-residue protein sequence, read N- to C-terminus: Bacteriochlorophyll c-binding protein (48 aa).

His-25 is a binding site for a bacteriochlorophyll c.

This sequence belongs to the BChl C/E-binding protein family.

The protein localises to the chlorosome. It localises to the chlorosome envelope. Functionally, component of the photosynthetic apparatus. The light harvesting B740 complex binds bacteriochlorophyll c. The polypeptide is Bacteriochlorophyll c-binding protein (csmA) (Chlorobaculum thiosulfatiphilum (Chlorobium limicola f.sp. thiosulfatophilum)).